The chain runs to 281 residues: DegV domain-containing protein SCO2569 (281 aa).

In terms of domain architecture, DegV spans 5–280 (VAIVTDSTAY…PGLLGVVVSS (276 aa)). Hexadecanoate contacts are provided by threonine 62 and serine 95.

Functionally, may bind long-chain fatty acids, such as palmitate, and may play a role in lipid transport or fatty acid metabolism. The chain is DegV domain-containing protein SCO2569 from Streptomyces coelicolor (strain ATCC BAA-471 / A3(2) / M145).